We begin with the raw amino-acid sequence, 81 residues long: Sec-independent protein translocase protein TatA (81 aa).

Residues 1-21 (MGSLSLWHWIIVGAVLLLLFG) form a helical membrane-spanning segment. A disordered region spans residues 41–81 (KKGLSEDDEKPEAARPAEPARSLDHQPVAEQPKVSETHRIG).

This sequence belongs to the TatA/E family. In terms of assembly, the Tat system comprises two distinct complexes: a TatABC complex, containing multiple copies of TatA, TatB and TatC subunits, and a separate TatA complex, containing only TatA subunits. Substrates initially bind to the TatABC complex, which probably triggers association of the separate TatA complex to form the active translocon.

It localises to the cell inner membrane. Functionally, part of the twin-arginine translocation (Tat) system that transports large folded proteins containing a characteristic twin-arginine motif in their signal peptide across membranes. TatA could form the protein-conducting channel of the Tat system. The protein is Sec-independent protein translocase protein TatA of Beijerinckia indica subsp. indica (strain ATCC 9039 / DSM 1715 / NCIMB 8712).